The primary structure comprises 437 residues: Elongator complex protein 4 (437 aa).

Residues 179-247 (FSKSSSPTTP…TKTGSQDSPL (69 aa)) are disordered. Residues 181 to 192 (KSSSPTTPSLEQ) are compositionally biased toward polar residues. Ser183 is subject to Phosphoserine. Positions 220-237 (SANNNNNNNNNSSSVTSS) are enriched in low complexity. Ser242 bears the Phosphoserine mark.

Belongs to the ELP4 family. As to quaternary structure, component of the elongator complex composed of Elp1, Elp2, Elp3, Elp4, Elp5 and Elp6. The elongator complex associates with and stabilizes microtubules; efficient interaction requires the full complex.

The protein resides in the cytoplasm. It is found in the nucleus. Its subcellular location is the cytoskeleton. It localises to the spindle. It participates in tRNA modification; 5-methoxycarbonylmethyl-2-thiouridine-tRNA biosynthesis. Its function is as follows. Component of the elongator complex, which is required for multiple tRNA modifications, including mcm5U (5-methoxycarbonylmethyl uridine), mcm5s2U (5-methoxycarbonylmethyl-2-thiouridine), and ncm5U (5-carbamoylmethyl uridine). The elongator complex catalyzes the formation of carboxymethyluridine in the wobble base at position 34 in tRNAs. Binding by the elongator complex stabilizes microtubules and promotes their growth. This induces central spindle asymmetry, promoting polarized signaling endosome trafficking during asymmetric cell division and cell fate assignation of sensory organ precursor cells. The polypeptide is Elongator complex protein 4 (Drosophila melanogaster (Fruit fly)).